The following is an 851-amino-acid chain: Transcriptional regulator RFX1 (851 aa).

Composition is skewed to polar residues over residues 1-11 (MSSDQTPQNRN) and 20-34 (PRLQ…STGP). Disordered regions lie at residues 1-121 (MSSD…EPHP), 134-170 (QSQF…PQTY), and 195-230 (HEAS…TGEN). Residues 38 to 53 (QQRERSQEQESDHEHQ) are compositionally biased toward basic and acidic residues. Residues 54-84 (QAQQHLHQFQQSNLTPSTTAFPSSTSIPTFS) show a composition bias toward low complexity. Positions 85 to 114 (KQDQGYHNQFSSPQSSYRKIGNFAQSSNAP) are enriched in polar residues. The span at 141 to 170 (YSSPYIGQSQSQSQSQSQAQPQPHPQPQTY) shows a compositional bias: low complexity. The span at 199–211 (SADNDSATNITTP) shows a compositional bias: polar residues. The RFX-type winged-helix DNA-binding region spans 282–357 (GMVWLLNSCD…YHYCGIKLTG (76 aa)). Disordered regions lie at residues 368–411 (YQQK…SVSY) and 783–806 (PPSL…TGTQ). The segment covering 384-393 (AQVGSSTSSA) has biased composition (polar residues). Residues 783-797 (PPSLSSLPQTQQQNP) are compositionally biased toward low complexity.

Belongs to the RFX family.

It localises to the nucleus. Functionally, transcription factor involved in DNA damage responses, morphogenesis, and virulence. The protein is Transcriptional regulator RFX1 (RFX1) of Candida albicans (strain SC5314 / ATCC MYA-2876) (Yeast).